The sequence spans 176 residues: MTTIVSVRRNGQVVIGGDGQATMGNTVMKGNVRKVRRLYNDKVIAGFAGGTADAFTLFELFERKLEMHQGHLTKAAVELAKDWRTDRMLRKLEALLAVADENTSLIITGNGDVIQPENDLIAIGSGGPFAQSAARAMLENTDLGARQIAEKALTIAGDICIYTNHNHNFEELPSKA.

T2 is an active-site residue. The Na(+) site is built by G157, C160, and T163.

Belongs to the peptidase T1B family. HslV subfamily. A double ring-shaped homohexamer of HslV is capped on each side by a ring-shaped HslU homohexamer. The assembly of the HslU/HslV complex is dependent on binding of ATP.

It is found in the cytoplasm. It carries out the reaction ATP-dependent cleavage of peptide bonds with broad specificity.. Its activity is regulated as follows. Allosterically activated by HslU binding. In terms of biological role, protease subunit of a proteasome-like degradation complex believed to be a general protein degrading machinery. The sequence is that of ATP-dependent protease subunit HslV from Photorhabdus laumondii subsp. laumondii (strain DSM 15139 / CIP 105565 / TT01) (Photorhabdus luminescens subsp. laumondii).